A 495-amino-acid chain; its full sequence is Angiopoietin-2 (495 aa).

The N-terminal stretch at 1-18 (MWQIVFFTLSCDLVRAAA) is a signal peptide. N-linked (GlcNAc...) asparagine glycans are attached at residues Asn88, Asn118, Asn132, Asn150, Asn239, and Asn303. The stretch at 165-247 (STNKLEKQIL…VNNSVLQKQQ (83 aa)) forms a coiled coil. The Fibrinogen C-terminal domain maps to 274 to 494 (KEEQIIYRDC…GTTMMIRPAD (221 aa)). Residues Cys283 and Cys312 are joined by a disulfide bond. The Ca(2+) site is built by Asp428, Asp430, Cys432, and Cys434. Intrachain disulfides connect Cys432/Cys434 and Cys436/Cys449.

Interacts with TEK/TIE2, competing for the same binding site as ANGPT1. Interacts with ITGA5. Interacts with SVEP1/polydom. Interacts with THBD; this interaction significantly inhibits the generation of activated PC and TAFIa/CPB2 by the thrombin/thrombomodulin complex.

Its subcellular location is the secreted. In terms of biological role, binds to TEK/TIE2, competing for the ANGPT1 binding site, and modulating ANGPT1 signaling. Can induce tyrosine phosphorylation of TEK/TIE2 in the absence of ANGPT1. In the absence of angiogenic inducers, such as VEGF, ANGPT2-mediated loosening of cell-matrix contacts may induce endothelial cell apoptosis with consequent vascular regression. In concert with VEGF, it may facilitate endothelial cell migration and proliferation, thus serving as a permissive angiogenic signal. Involved in the regulation of lymphangiogenesis. The polypeptide is Angiopoietin-2 (ANGPT2) (Canis lupus familiaris (Dog)).